The chain runs to 357 residues: Phosphoribosylformylglycinamidine cyclo-ligase (357 aa).

It belongs to the AIR synthase family.

The protein localises to the cytoplasm. It carries out the reaction 2-formamido-N(1)-(5-O-phospho-beta-D-ribosyl)acetamidine + ATP = 5-amino-1-(5-phospho-beta-D-ribosyl)imidazole + ADP + phosphate + H(+). It participates in purine metabolism; IMP biosynthesis via de novo pathway; 5-amino-1-(5-phospho-D-ribosyl)imidazole from N(2)-formyl-N(1)-(5-phospho-D-ribosyl)glycinamide: step 2/2. The protein is Phosphoribosylformylglycinamidine cyclo-ligase of Rhizobium rhizogenes (strain K84 / ATCC BAA-868) (Agrobacterium radiobacter).